Consider the following 351-residue polypeptide: MTNSIRIGTRKSPLALIHTNLVIQQIKQFFPDINCEIVPIITSGDLIQNKPLYDIGGKALFLKEIEQALLDKKIDLAVHSLKDVPGRIPEPLVIAAVLEREDPRDVFVCLKYKSIEELPQNAVIGSSAVRRKAFIQKIRPDLKVTVFRGNVDSRIKKLMTGEVDATILAYTGLKRLEVFNPEYCHLIEYSQMLPCIGQGVIAVEIRKDDNAMLEICNQINHLPTFELIKPERAFLEYLDANCRTPIAAYSQYLDANPRHLSKLAYREVFEGNTEALATAAYKSNRTDASTGLTYKLPLEVEFGKMYNIQTNFMLGNLDGSKITFHTETTNIKTSTEAGIKAAKMMLEAICK.

At cysteine 242 the chain carries S-(dipyrrolylmethanemethyl)cysteine.

It belongs to the HMBS family. As to quaternary structure, monomer. Requires dipyrromethane as cofactor.

It catalyses the reaction 4 porphobilinogen + H2O = hydroxymethylbilane + 4 NH4(+). Its pathway is porphyrin-containing compound metabolism; protoporphyrin-IX biosynthesis; coproporphyrinogen-III from 5-aminolevulinate: step 2/4. Its function is as follows. Tetrapolymerization of the monopyrrole PBG into the hydroxymethylbilane pre-uroporphyrinogen in several discrete steps. This Rickettsia peacockii (strain Rustic) protein is Porphobilinogen deaminase.